Reading from the N-terminus, the 151-residue chain is D-ribose pyranase 1 (151 aa).

H20 functions as the Proton donor in the catalytic mechanism. Substrate-binding positions include D28, H98, and 121-123 (WGN).

The protein belongs to the RbsD / FucU family. RbsD subfamily. Homodecamer.

It localises to the cytoplasm. The enzyme catalyses beta-D-ribopyranose = beta-D-ribofuranose. Its pathway is carbohydrate metabolism; D-ribose degradation; D-ribose 5-phosphate from beta-D-ribopyranose: step 1/2. In terms of biological role, catalyzes the interconversion of beta-pyran and beta-furan forms of D-ribose. This is D-ribose pyranase 1 from Streptomyces griseus subsp. griseus (strain JCM 4626 / CBS 651.72 / NBRC 13350 / KCC S-0626 / ISP 5235).